The primary structure comprises 57 residues: Stress response protein (57 aa).

A Nuclear localization signal motif is present at residues 6-10; the sequence is RKERR.

As to expression, mesophyll protoplasts.

It is found in the nucleus. In terms of biological role, stress response. May play a role in the reentering of protoplasts into the cell cycle. The sequence is that of Stress response protein from Nicotiana sylvestris (Wood tobacco).